We begin with the raw amino-acid sequence, 243 residues long: Probable transcriptional regulatory protein BAPKO_0024/BafPKo_0025 (243 aa).

Belongs to the TACO1 family.

It is found in the cytoplasm. The protein is Probable transcriptional regulatory protein BAPKO_0024/BafPKo_0025 of Borreliella afzelii (strain PKo) (Borrelia afzelii).